The sequence spans 811 residues: Bifunctional enzyme MurC/Ddl (811 aa).

A UDP-N-acetylmuramate--alanine ligase region spans residues M1–K450. ATP contacts are provided by residues G111–T117 and L607–I662. Positions K451–S811 are D-alanine--D-alanine ligase. The ATP-grasp domain maps to K574–I785. The Mg(2+) site is built by D739, E752, and N754.

It in the N-terminal section; belongs to the MurCDEF family. This sequence in the C-terminal section; belongs to the D-alanine--D-alanine ligase family. Requires Mg(2+) as cofactor. The cofactor is Mn(2+).

The protein localises to the cytoplasm. The enzyme catalyses UDP-N-acetyl-alpha-D-muramate + L-alanine + ATP = UDP-N-acetyl-alpha-D-muramoyl-L-alanine + ADP + phosphate + H(+). It carries out the reaction 2 D-alanine + ATP = D-alanyl-D-alanine + ADP + phosphate + H(+). Its pathway is cell wall biogenesis; peptidoglycan biosynthesis. The polypeptide is Bifunctional enzyme MurC/Ddl (murC/ddlA) (Chlamydia caviae (strain ATCC VR-813 / DSM 19441 / 03DC25 / GPIC) (Chlamydophila caviae)).